Consider the following 273-residue polypeptide: Large ribosomal subunit protein uL2 (273 aa).

Residues 222–273 form a disordered region; sequence GMAMNPVDHPHGGGEGRNKGIQPVSPWGTPAKGYRTRSNKRTDKYIVRRRNK. A compositionally biased stretch (basic and acidic residues) spans 229-239; it reads DHPHGGGEGRN.

The protein belongs to the universal ribosomal protein uL2 family. In terms of assembly, part of the 50S ribosomal subunit. Forms a bridge to the 30S subunit in the 70S ribosome.

Functionally, one of the primary rRNA binding proteins. Required for association of the 30S and 50S subunits to form the 70S ribosome, for tRNA binding and peptide bond formation. It has been suggested to have peptidyltransferase activity; this is somewhat controversial. Makes several contacts with the 16S rRNA in the 70S ribosome. The sequence is that of Large ribosomal subunit protein uL2 from Tolumonas auensis (strain DSM 9187 / NBRC 110442 / TA 4).